The following is a 289-amino-acid chain: S-methyl-5'-thioadenosine phosphorylase (289 aa).

Residues Ser-24, 66–67 (RH), and 99–100 (TA) each bind phosphate. Substrate is bound at residue Met-202. A phosphate-binding site is contributed by Thr-203. Substrate is bound at residue 226-228 (DYD).

This sequence belongs to the PNP/MTAP phosphorylase family. MTAP subfamily. In terms of assembly, homotrimer.

The protein resides in the cytoplasm. It localises to the nucleus. The enzyme catalyses S-methyl-5'-thioadenosine + phosphate = 5-(methylsulfanyl)-alpha-D-ribose 1-phosphate + adenine. Its pathway is amino-acid biosynthesis; L-methionine biosynthesis via salvage pathway; S-methyl-5-thio-alpha-D-ribose 1-phosphate from S-methyl-5'-thioadenosine (phosphorylase route): step 1/1. Catalyzes the reversible phosphorylation of S-methyl-5'-thioadenosine (MTA) to adenine and 5-methylthioribose-1-phosphate. Involved in the breakdown of MTA, a major by-product of polyamine biosynthesis. Responsible for the first step in the methionine salvage pathway after MTA has been generated from S-adenosylmethionine. Has broad substrate specificity with 6-aminopurine nucleosides as preferred substrates. In Drosophila pseudoobscura pseudoobscura (Fruit fly), this protein is S-methyl-5'-thioadenosine phosphorylase.